We begin with the raw amino-acid sequence, 457 residues long: GTPase Era, mitochondrial (457 aa).

A mitochondrion-targeting transit peptide spans 1–18 (MAFRVSISTFGKSLRVRR). The 244-residue stretch at 107-350 (KVLRVAIIGA…RYLVVGAKPG (244 aa)) folds into the Era-type G domain. The interval 115 to 122 (GAPNAGKS) is G1. Residue 115–122 (GAPNAGKS) coordinates GTP. The interval 141 to 145 (HTTRA) is G2. The G3 stretch occupies residues 162–165 (DTPG). GTP contacts are provided by residues 162–166 (DTPGL) and 231–234 (NKVD). Positions 231 to 234 (NKVD) are G4. The segment covering 270-290 (AERRTDREARTSGSGDEEKPG) has biased composition (basic and acidic residues). Residues 270 to 300 (AERRTDREARTSGSGDEEKPGGDVADGEGSE) are disordered. The tract at residues 328-330 (VSA) is G5. The KH type-2 domain occupies 376–457 (LLEYLPKEVP…KLRLSVKVKN (82 aa)).

Belongs to the TRAFAC class TrmE-Era-EngA-EngB-Septin-like GTPase superfamily. Era GTPase family.

The protein localises to the mitochondrion matrix. The protein resides in the mitochondrion inner membrane. Probable GTPase that plays a role in the mitochondrial ribosomal small subunit assembly. Specifically binds the 12S mitochondrial rRNA (12S mt-rRNA) to a 33 nucleotide section delineating the 3' terminal stem-loop region. May act as a chaperone that protects the 12S mt-rRNA on the 28S mitoribosomal subunit during ribosomal small subunit assembly. The polypeptide is GTPase Era, mitochondrial (eral1) (Salmo salar (Atlantic salmon)).